The following is a 376-amino-acid chain: 4-hydroxy-3-methylbut-2-enyl diphosphate reductase (376 aa).

Position 19 (C19) interacts with [4Fe-4S] cluster. (2E)-4-hydroxy-3-methylbut-2-enyl diphosphate-binding residues include H48 and H99. Dimethylallyl diphosphate contacts are provided by H48 and H99. The isopentenyl diphosphate site is built by H48 and H99. C121 is a binding site for [4Fe-4S] cluster. H149 contributes to the (2E)-4-hydroxy-3-methylbut-2-enyl diphosphate binding site. Position 149 (H149) interacts with dimethylallyl diphosphate. H149 contacts isopentenyl diphosphate. E151 (proton donor) is an active-site residue. T208 contributes to the (2E)-4-hydroxy-3-methylbut-2-enyl diphosphate binding site. C236 contacts [4Fe-4S] cluster. 3 residues coordinate (2E)-4-hydroxy-3-methylbut-2-enyl diphosphate: S264, N266, and S307. Residues S264, N266, and S307 each contribute to the dimethylallyl diphosphate site. 3 residues coordinate isopentenyl diphosphate: S264, N266, and S307.

The protein belongs to the IspH family. It depends on [4Fe-4S] cluster as a cofactor.

The catalysed reaction is isopentenyl diphosphate + 2 oxidized [2Fe-2S]-[ferredoxin] + H2O = (2E)-4-hydroxy-3-methylbut-2-enyl diphosphate + 2 reduced [2Fe-2S]-[ferredoxin] + 2 H(+). The enzyme catalyses dimethylallyl diphosphate + 2 oxidized [2Fe-2S]-[ferredoxin] + H2O = (2E)-4-hydroxy-3-methylbut-2-enyl diphosphate + 2 reduced [2Fe-2S]-[ferredoxin] + 2 H(+). It participates in isoprenoid biosynthesis; dimethylallyl diphosphate biosynthesis; dimethylallyl diphosphate from (2E)-4-hydroxy-3-methylbutenyl diphosphate: step 1/1. It functions in the pathway isoprenoid biosynthesis; isopentenyl diphosphate biosynthesis via DXP pathway; isopentenyl diphosphate from 1-deoxy-D-xylulose 5-phosphate: step 6/6. In terms of biological role, catalyzes the conversion of 1-hydroxy-2-methyl-2-(E)-butenyl 4-diphosphate (HMBPP) into a mixture of isopentenyl diphosphate (IPP) and dimethylallyl diphosphate (DMAPP). Acts in the terminal step of the DOXP/MEP pathway for isoprenoid precursor biosynthesis. The protein is 4-hydroxy-3-methylbut-2-enyl diphosphate reductase of Treponema pallidum (strain Nichols).